The primary structure comprises 166 residues: NAD(P)H-quinone oxidoreductase subunit I, chloroplastic (166 aa).

4Fe-4S ferredoxin-type domains are found at residues 55-84 (GRIH…VDWK) and 95-124 (LNYS…MTEE). [4Fe-4S] cluster is bound by residues Cys64, Cys67, Cys70, Cys74, Cys104, Cys107, Cys110, and Cys114.

Belongs to the complex I 23 kDa subunit family. As to quaternary structure, NDH is composed of at least 16 different subunits, 5 of which are encoded in the nucleus. The cofactor is [4Fe-4S] cluster.

It localises to the plastid. The protein localises to the chloroplast thylakoid membrane. The catalysed reaction is a plastoquinone + NADH + (n+1) H(+)(in) = a plastoquinol + NAD(+) + n H(+)(out). It carries out the reaction a plastoquinone + NADPH + (n+1) H(+)(in) = a plastoquinol + NADP(+) + n H(+)(out). In terms of biological role, NDH shuttles electrons from NAD(P)H:plastoquinone, via FMN and iron-sulfur (Fe-S) centers, to quinones in the photosynthetic chain and possibly in a chloroplast respiratory chain. The immediate electron acceptor for the enzyme in this species is believed to be plastoquinone. Couples the redox reaction to proton translocation, and thus conserves the redox energy in a proton gradient. This Enydra sessilis (Smallray swampwort) protein is NAD(P)H-quinone oxidoreductase subunit I, chloroplastic.